The chain runs to 296 residues: Ribonuclease HIII (296 aa).

One can recognise an RNase H type-2 domain in the interval 80–296 (LALIGSDEVG…NTKKAYQRLK (217 aa)). A divalent metal cation-binding residues include aspartate 86, glutamate 87, and aspartate 191.

It belongs to the RNase HII family. RnhC subfamily. It depends on Mn(2+) as a cofactor. Requires Mg(2+) as cofactor.

It is found in the cytoplasm. It carries out the reaction Endonucleolytic cleavage to 5'-phosphomonoester.. Functionally, endonuclease that specifically degrades the RNA of RNA-DNA hybrids. In Streptococcus thermophilus (strain CNRZ 1066), this protein is Ribonuclease HIII.